The following is a 676-amino-acid chain: DNA ligase (676 aa).

Positions 1 to 10 (MTQAHHDDAG) are enriched in basic and acidic residues. Residues 1–23 (MTQAHHDDAGARNALQGGLATDP) are disordered. Residues 52 to 56 (DAAFD) and 95 to 96 (SL) contribute to the NAD(+) site. K148 (N6-AMP-lysine intermediate) is an active-site residue. 3 residues coordinate NAD(+): R169, E203, and K330. Zn(2+) contacts are provided by C420, C423, C436, and C441. The BRCT domain maps to 593 to 676 (EAEGPLAGLT…DKLIAERRGG (84 aa)).

Belongs to the NAD-dependent DNA ligase family. LigA subfamily. It depends on Mg(2+) as a cofactor. Mn(2+) is required as a cofactor.

It catalyses the reaction NAD(+) + (deoxyribonucleotide)n-3'-hydroxyl + 5'-phospho-(deoxyribonucleotide)m = (deoxyribonucleotide)n+m + AMP + beta-nicotinamide D-nucleotide.. Its function is as follows. DNA ligase that catalyzes the formation of phosphodiester linkages between 5'-phosphoryl and 3'-hydroxyl groups in double-stranded DNA using NAD as a coenzyme and as the energy source for the reaction. It is essential for DNA replication and repair of damaged DNA. The sequence is that of DNA ligase from Sorangium cellulosum (strain So ce56) (Polyangium cellulosum (strain So ce56)).